The sequence spans 414 residues: Putative dipeptidase TRV_05564 (414 aa).

An N-terminal signal peptide occupies residues 1-20 (MAALFVSLLALTSLVPVQGA). H45, D47, and E157 together coordinate Zn(2+). A disulfide bond links C96 and C186. H184 contributes to the substrate binding site. Positions 228 and 249 each coordinate Zn(2+). Substrate-binding residues include R260 and D320. The N-linked (GlcNAc...) asparagine glycan is linked to N392.

Belongs to the metallo-dependent hydrolases superfamily. Peptidase M19 family. Requires Zn(2+) as cofactor.

It carries out the reaction an L-aminoacyl-L-amino acid + H2O = 2 an L-alpha-amino acid. Hydrolyzes a wide range of dipeptides. In Trichophyton verrucosum (strain HKI 0517), this protein is Putative dipeptidase TRV_05564.